The primary structure comprises 235 residues: Ribosomal RNA small subunit methyltransferase G (235 aa).

Residues glycine 98, methionine 103, 149-150 (VE), and arginine 164 contribute to the S-adenosyl-L-methionine site.

Belongs to the methyltransferase superfamily. RNA methyltransferase RsmG family.

The protein resides in the cytoplasm. The enzyme catalyses guanosine(527) in 16S rRNA + S-adenosyl-L-methionine = N(7)-methylguanosine(527) in 16S rRNA + S-adenosyl-L-homocysteine. Functionally, specifically methylates the N7 position of guanine in position 527 of 16S rRNA. In Cupriavidus metallidurans (strain ATCC 43123 / DSM 2839 / NBRC 102507 / CH34) (Ralstonia metallidurans), this protein is Ribosomal RNA small subunit methyltransferase G.